The primary structure comprises 609 residues: MIQALLVAICLAVFPYQGSSIILESGNVNDYEVVYPQKVPALSKGGVQNPQPETKYEDTMQYEFHVNGEPVVLHLERNKGLFSEDYTETHYAPDGREITTSSPVQDHCYYHGYIQNEADSSAVISACDGLKGHFKHQGETYFIEPLELSDSEAHAIYKDENVEEEEEIPKICGVTQTTWESDEPIEKSSQLTNTPEQDRYLQAKKYIEFYVVVDNVMYRKYTGKLHVITRRVYEMVNALNTMYRRLNFHIALIGLEIWSNGNEINVQSDVQATLDLFGEWRENKLLPRKRNDNAQLLTSTEFNGTTTGLGYIGSLCSPKKSVAVVQDHSKSTSMVAITMAHQMGHNLGMNDDRASCTCGSNKCIMSTKYYESLSEFSSCSVQEHREYLLRDRPQCILNKPSRKAIVTPPVCGNYFVERGEECDCGSPEDCQNTCCDAATCKLQHEAQCDSGECCEKCKFKGAGAECRAAKNDCDFPELCTGRSAKCPKDSFQRNGHPCQNNQGYCYNGTCPTLTNQCATLWGPGAKMSPGLCFMLNWNARSCGLCRKENGRKILCAAKDVKCGRLFCKKKNSMICHCPPPSKDPNYGMVAPGTKCGVKKVCRNRQCVKV.

The signal sequence occupies residues 1–20; that stretch reads MIQALLVAICLAVFPYQGSS. Residues 21 to 191 constitute a propeptide that is removed on maturation; that stretch reads IILESGNVND…DEPIEKSSQL (171 aa). Residues 205-400 form the Peptidase M12B domain; that stretch reads KYIEFYVVVD…DRPQCILNKP (196 aa). Ca(2+)-binding residues include E208 and D292. N303 carries an N-linked (GlcNAc...) asparagine glycan. Disulfide bonds link C316–C395, C356–C379, and C358–C363. The Zn(2+) site is built by H341 and H345. Ca(2+)-binding residues include C395, N398, V410, N413, F415, E417, E420, and D423. Residues 408-494 form the Disintegrin domain; that stretch reads PPVCGNYFVE…KCPKDSFQRN (87 aa). 14 disulfides stabilise this stretch: C411–C440, C422–C435, C424–C430, C434–C457, C448–C454, C453–C479, C466–C486, C473–C505, C498–C510, C517–C567, C532–C575, C545–C555, C562–C601, and C595–C606. The short motif at 472–474 is the D/ECD-tripeptide element; sequence DCD. N-linked (GlcNAc...) asparagine glycosylation is present at N507.

This sequence belongs to the venom metalloproteinase (M12B) family. P-III subfamily. P-IIIa sub-subfamily. As to quaternary structure, monomer. Zn(2+) serves as cofactor. As to expression, expressed by the venom gland.

The protein resides in the secreted. Its activity is regulated as follows. Inhibited by EDTA and diisopropyl fluorophosphate (DFP). Also inhibited by an excess of zinc or calcium ions. Snake venom zinc metalloproteinase that inhibits platelet aggregation by cleaving platelet glycoprotein Ib alpha (GP1BA) at Glu-298/Asp-299, and abolishes binding of von Willebrand factor (VWF) to GPIBA. Cleaves P-selectin glycoprotein ligand-1 (PSGL-1/SELPLG) at Tyr-51/Asp-52, and completely abolishes the binding of PSGL-1 to P-selectin. Anionic amino acid sequences containing sulfated tyrosines are needed for cleavages. Inhibits the thrombin-induced platelet aggregation, and the thrombin-induced release of ATP and ADP. Has lectin activity (inhibited by heparin). The sequence is that of Snake venom metalloproteinase-disintegrin-like mocarhagin from Naja mossambica (Mozambique spitting cobra).